A 328-amino-acid polypeptide reads, in one-letter code: Stress response kinase A (328 aa).

Asp201 acts as the Proton acceptor in catalysis. Residues Asn206 and Asp217 each contribute to the Mg(2+) site. Asp217 is a catalytic residue.

It belongs to the SrkA/RdoA protein kinase family. In terms of assembly, monomer. Mg(2+) is required as a cofactor.

It is found in the cytoplasm. It carries out the reaction L-seryl-[protein] + ATP = O-phospho-L-seryl-[protein] + ADP + H(+). It catalyses the reaction L-threonyl-[protein] + ATP = O-phospho-L-threonyl-[protein] + ADP + H(+). Its function is as follows. A protein kinase that phosphorylates Ser and Thr residues. Probably acts to suppress the effects of stress linked to accumulation of reactive oxygen species. Probably involved in the extracytoplasmic stress response. The chain is Stress response kinase A from Escherichia coli O6:H1 (strain CFT073 / ATCC 700928 / UPEC).